The following is a 2400-amino-acid chain: Retinitis pigmentosa 1-like 1 protein (2400 aa).

Doublecortin domains follow at residues 34-118 (KKIT…GPGR) and 152-231 (RRIL…PAMK). 6 disordered regions span residues 104-152 (CSDK…KTPR), 230-310 (MKNA…DDMK), 444-1064 (GRER…DREA), 1188-1251 (AMTE…GDLE), 1275-1501 (EAER…GAAE), and 1697-2400 (RGEH…DLDF). The span at 242-251 (SGLTSRNKNG) shows a compositional bias: polar residues. Residues 277-287 (RPGPSNPPVGP) are compositionally biased toward pro residues. Positions 450-460 (QDSASPASSTG) are enriched in polar residues. Low complexity-rich tracts occupy residues 530–543 (GASS…GSHE) and 573–584 (DPASPALSLSSL). Polar residues predominate over residues 591–601 (AETQGQGTEQA). 2 stretches are compositionally biased toward low complexity: residues 625–637 (SSTP…SQQG) and 645–654 (ASAMSSPSSP). Basic residues predominate over residues 661–670 (PRGHPRHSHY). Composition is skewed to polar residues over residues 711–740 (TRTQ…SATV) and 825–835 (CCSQPGTQPAQ). Low complexity-rich tracts occupy residues 864-880 (QRRS…HQST), 903-921 (PNSG…GSRG), and 941-953 (SGVS…RSSP). Polar residues-rich tracts occupy residues 1223–1238 (LVTQ…SNQR) and 1285–1299 (ASSN…TVQE). The stretch at 1292–1307 (LAENTVQEEVQLEETK) is one 1-1; approximate repeat. The segment at 1292-1342 (LAENTVQEEVQLEETKEGTEGEGLQEEAVQLEETKTEEGLQEEGVQLEETK) is 3 X 16 AA approximate tandem repeats of T-E-E-G-L-Q-E-E-G-V-Q-L-E-E-T-K. A 1-2; approximate repeat occupies 1310-1326 (TEGEGLQEEAVQLEETK). A 1-3 repeat occupies 1327-1342 (TEEGLQEEGVQLEETK). Over residues 1346 to 1363 (GEGQQEEEAQLEEIEETG) the composition is skewed to acidic residues. Over residues 1434 to 1445 (RASASAEPCPAE) the composition is skewed to low complexity. 2 stretches are compositionally biased toward polar residues: residues 1460-1472 (TDPS…SGSQ) and 1489-1501 (EHTQ…GAAE). A compositionally biased stretch (gly residues) spans 1726 to 1736 (AEGGLGPGLSQ). Composition is skewed to basic and acidic residues over residues 1752 to 1762 (LNRDKDPKLGE) and 1769 to 1778 (AQEREGKTHN). 3 tandem repeats follow at residues 1836–1851 (EAPE…SEGV), 1852–1867 (EAPE…EGEA), and 1875–1890 (EAPE…SEDV). Composition is skewed to acidic residues over residues 1836 to 1909 (EAPE…AEAP) and 1920 to 1948 (ESVE…EAAQ). The tract at residues 1836-2244 (EAPEAEGEAQ…GEAQPESEGE (409 aa)) is 25 X 16 AA approximate tandem repeats of [ED]-[AT]-[PQ]-[ED]-[AVT]-E-[GKE]-[ED]-[AMT]-Q-[EPK]-[EAT]-[TSELP]-[EG]-[EGSQDI]-[AVIE]. One copy of the 2-4; approximate repeat lies at 1891–1906 (ETPEAEWEVQPESEGA). The stretch at 1907 to 1921 (EAPEAEKEAQPETES) is one 2-5 repeat. A 2-6; approximate repeat occupies 1923-1938 (EALETEGEDEPESEGA). A coiled-coil region spans residues 1934 to 2017 (ESEGAEAQEA…EMQEAEEEAQ (84 aa)). Residues 1939–1954 (EAQEAEEAAQEAEGQT) form a 2-7 repeat. The segment covering 1949-1958 (EAEGQTQPES) has biased composition (low complexity). Residues 1955 to 1970 (QPESEVIESQEAEEEA) form a 2-8; approximate repeat. 4 stretches are compositionally biased toward acidic residues: residues 1959–2022 (EVIE…ESDG), 2048–2075 (AQPE…QEAE), 2083–2108 (EDVD…EAEG), and 2117–2245 (EAPE…EGET). A 2-9; approximate repeat occupies 1971–1984 (QPESEDVEALEVEV). Repeat copies occupy residues 1985–2000 (ETQE…SEDV) and 2001–2016 (EAPE…EEEA). One copy of the 2-12; approximate repeat lies at 2017–2031 (QPESDGVEAQPKSEG). The stretch at 2033–2048 (EAQEVEGETQKTEGDA) is one 2-13d repeat. Residues 2054-2081 (GVEAPEAEEEAQEAEGEVQEAEGEAHPE) adopt a coiled-coil conformation. The 2-14 repeat unit spans residues 2056 to 2071 (EAPEAEEEAQEAEGEV). Residues 2072 to 2085 (QEAEGEAHPESEDV) form a 2-15; approximate repeat. 10 consecutive repeat copies span residues 2086-2101 (DAQE…SEGV), 2102-2116 (EAPE…AEGI), 2117-2132 (EAPE…SEGI), 2133-2148 (EAPE…SEGV), 2149-2164 (EAQD…SEGI), 2165-2180 (EAQE…LEGV), 2181-2196 (EAPE…SEGI), 2197-2212 (EAPE…LEGV), 2213-2228 (EAPE…PEGV), and 2229-2244 (ETPE…SEGE). Residues 2292 to 2308 (PGSQTGPSSSRASSWGN) are compositionally biased toward polar residues. The segment covering 2312–2327 (KDSENDHVLGDTRSPD) has biased composition (basic and acidic residues).

Interacts with RP1; has a synergistic effect with RP1 in photoreceptor differentiation. In terms of tissue distribution, retinal-specific; expressed in photoreceptor.

It is found in the cytoplasm. The protein resides in the cytoskeleton. It localises to the cilium axoneme. Its subcellular location is the cell projection. The protein localises to the cilium. It is found in the photoreceptor outer segment. Functionally, required for the differentiation of photoreceptor cells. Plays a role in the organization of outer segment of rod and cone photoreceptors. This is Retinitis pigmentosa 1-like 1 protein (RP1L1) from Homo sapiens (Human).